A 234-amino-acid chain; its full sequence is AA9 family lytic polysaccharide monooxygenase D (234 aa).

An N-terminal signal peptide occupies residues Met1–Ala18. Positions 19 and 95 each coordinate Cu(2+). The cysteines at positions 57 and 182 are disulfide-linked. O2 is bound by residues His168 and Gln177. A Cu(2+)-binding site is contributed by Tyr179.

It belongs to the polysaccharide monooxygenase AA9 family. Requires Cu(2+) as cofactor.

It localises to the secreted. It carries out the reaction [(1-&gt;4)-beta-D-glucosyl]n+m + reduced acceptor + O2 = 4-dehydro-beta-D-glucosyl-[(1-&gt;4)-beta-D-glucosyl]n-1 + [(1-&gt;4)-beta-D-glucosyl]m + acceptor + H2O.. Its function is as follows. Lytic polysaccharide monooxygenase (LPMO) that depolymerizes crystalline and amorphous polysaccharides via the oxidation of scissile alpha- or beta-(1-4)-glycosidic bonds, yielding C1 or C4 oxidation products. Catalysis by LPMOs requires the reduction of the active-site copper from Cu(II) to Cu(I) by a reducing agent and H(2)O(2) or O(2) as a cosubstrate. In Malbranchea cinnamomea (Thermophilic fungus), this protein is AA9 family lytic polysaccharide monooxygenase D.